The chain runs to 258 residues: Tryptophan synthase alpha chain (258 aa).

Residues glutamate 50 and aspartate 61 each act as proton acceptor in the active site.

This sequence belongs to the TrpA family. In terms of assembly, tetramer of two alpha and two beta chains.

The enzyme catalyses (1S,2R)-1-C-(indol-3-yl)glycerol 3-phosphate + L-serine = D-glyceraldehyde 3-phosphate + L-tryptophan + H2O. Its pathway is amino-acid biosynthesis; L-tryptophan biosynthesis; L-tryptophan from chorismate: step 5/5. Functionally, the alpha subunit is responsible for the aldol cleavage of indoleglycerol phosphate to indole and glyceraldehyde 3-phosphate. The chain is Tryptophan synthase alpha chain from Clostridium beijerinckii (strain ATCC 51743 / NCIMB 8052) (Clostridium acetobutylicum).